Reading from the N-terminus, the 533-residue chain is Peptide chain release factor 3 (533 aa).

Residues 10-278 (EKRRTFAIIS…TFVEIAPPPQ (269 aa)) form the tr-type G domain. Residues 19–26 (SHPDAGKT), 87–91 (DTPGH), and 141–144 (NKMD) contribute to the GTP site.

This sequence belongs to the TRAFAC class translation factor GTPase superfamily. Classic translation factor GTPase family. PrfC subfamily.

It localises to the cytoplasm. Functionally, increases the formation of ribosomal termination complexes and stimulates activities of RF-1 and RF-2. It binds guanine nucleotides and has strong preference for UGA stop codons. It may interact directly with the ribosome. The stimulation of RF-1 and RF-2 is significantly reduced by GTP and GDP, but not by GMP. The polypeptide is Peptide chain release factor 3 (Salinibacter ruber (strain DSM 13855 / M31)).